We begin with the raw amino-acid sequence, 366 residues long: Phospho-N-acetylmuramoyl-pentapeptide-transferase (366 aa).

10 consecutive transmembrane segments (helical) span residues 3-23 (QIFI…PVLI), 54-74 (GIAV…VGLV), 80-100 (PGVS…LGFA), 120-140 (LVGQ…FPNA), 161-181 (IAIG…YLVI), 197-217 (LASG…FWQF), 238-258 (LSML…WNAA), 262-282 (IFMG…LSVT), 288-308 (LMIL…IQVV), and 341-361 (FWLL…AEWL).

Belongs to the glycosyltransferase 4 family. MraY subfamily. Requires Mg(2+) as cofactor.

Its subcellular location is the cell membrane. The enzyme catalyses UDP-N-acetyl-alpha-D-muramoyl-L-alanyl-gamma-D-glutamyl-meso-2,6-diaminopimeloyl-D-alanyl-D-alanine + di-trans,octa-cis-undecaprenyl phosphate = di-trans,octa-cis-undecaprenyl diphospho-N-acetyl-alpha-D-muramoyl-L-alanyl-D-glutamyl-meso-2,6-diaminopimeloyl-D-alanyl-D-alanine + UMP. It participates in cell wall biogenesis; peptidoglycan biosynthesis. Functionally, catalyzes the initial step of the lipid cycle reactions in the biosynthesis of the cell wall peptidoglycan: transfers peptidoglycan precursor phospho-MurNAc-pentapeptide from UDP-MurNAc-pentapeptide onto the lipid carrier undecaprenyl phosphate, yielding undecaprenyl-pyrophosphoryl-MurNAc-pentapeptide, known as lipid I. In Corynebacterium jeikeium (strain K411), this protein is Phospho-N-acetylmuramoyl-pentapeptide-transferase.